We begin with the raw amino-acid sequence, 351 residues long: Protein arginine N-methyltransferase 1-B (351 aa).

In terms of domain architecture, SAM-dependent MTase PRMT-type spans 30-331 (KDYYFDSYAH…KNNRDLDFTV (302 aa)). The S-adenosyl-L-methionine site is built by H43, R52, G76, E98, and E127. Catalysis depends on residues E142 and E151.

It belongs to the class I-like SAM-binding methyltransferase superfamily. Protein arginine N-methyltransferase family. As to quaternary structure, homodimer. Homooctamer; individual homodimers associates to form a homooctamer and homooligomerization is required for proper localization to the cell membrane. Individual homodimers can associate to form a homohexamer. Component of a complex with lsm14a/rap55a. Interacts with cirbp. From the onset of gastrulation, expressed in dorsal mesoderm, and in dorsal and ventral ectoderm. At the neurula and tail bud stages, expression is restricted to the neuroectoderm, with highest expression in the anterior neural plate.

The protein localises to the nucleus. The protein resides in the nucleoplasm. It is found in the cytoplasm. Its subcellular location is the cytosol. It catalyses the reaction L-arginyl-[protein] + 2 S-adenosyl-L-methionine = N(omega),N(omega)-dimethyl-L-arginyl-[protein] + 2 S-adenosyl-L-homocysteine + 2 H(+). The enzyme catalyses L-arginyl-[protein] + S-adenosyl-L-methionine = N(omega)-methyl-L-arginyl-[protein] + S-adenosyl-L-homocysteine + H(+). The catalysed reaction is N(omega)-methyl-L-arginyl-[protein] + S-adenosyl-L-methionine = N(omega),N(omega)-dimethyl-L-arginyl-[protein] + S-adenosyl-L-homocysteine + H(+). Its function is as follows. Arginine methyltransferase that methylates (mono and asymmetric dimethylation) the guanidino nitrogens of arginyl residues present in target proteins. Constitutes the main enzyme that mediates monomethylation and asymmetric dimethylation of histone H4 'Arg-4' (H4R3me1 and H4R3me2a, respectively), a specific tag for epigenetic transcriptional activation. Methylates ilf3 to regulate its DNA-binding activity. Required for neural induction, playing a key role in the control of epidermal versus neural cell fate choice. The chain is Protein arginine N-methyltransferase 1-B (prmt1-b) from Xenopus laevis (African clawed frog).